A 321-amino-acid polypeptide reads, in one-letter code: ATP-dependent 6-phosphofructokinase (321 aa).

Position 12 (Gly12) interacts with ATP. ADP contacts are provided by residues 22 to 26 (RGVVR) and 55 to 60 (RYSVSD). ATP-binding positions include 73–74 (RF) and 103–106 (GDGS). Residue Asp104 coordinates Mg(2+). Residue 127–129 (TID) coordinates substrate. Residue Asp129 is the Proton acceptor of the active site. Arg156 lines the ADP pocket. Residues Arg164 and 171–173 (MGR) each bind substrate. Residues 187-189 (GCE), Lys213, and 215-217 (KRH) contribute to the ADP site. Substrate-binding positions include Glu224, Arg245, and 251–254 (HIQR).

It belongs to the phosphofructokinase type A (PFKA) family. ATP-dependent PFK group I subfamily. Prokaryotic clade 'B1' sub-subfamily. In terms of assembly, homotetramer. Mg(2+) is required as a cofactor.

It is found in the cytoplasm. It catalyses the reaction beta-D-fructose 6-phosphate + ATP = beta-D-fructose 1,6-bisphosphate + ADP + H(+). It functions in the pathway carbohydrate degradation; glycolysis; D-glyceraldehyde 3-phosphate and glycerone phosphate from D-glucose: step 3/4. With respect to regulation, allosterically activated by ADP and other diphosphonucleosides, and allosterically inhibited by phosphoenolpyruvate. Its function is as follows. Catalyzes the phosphorylation of D-fructose 6-phosphate to fructose 1,6-bisphosphate by ATP, the first committing step of glycolysis. The chain is ATP-dependent 6-phosphofructokinase from Histophilus somni (strain 129Pt) (Haemophilus somnus).